Consider the following 541-residue polypeptide: Arginine--tRNA ligase (541 aa).

Residues 119–129 (ANPTGPLHIGH) carry the 'HIGH' region motif.

Belongs to the class-I aminoacyl-tRNA synthetase family. As to quaternary structure, monomer.

It localises to the cytoplasm. It catalyses the reaction tRNA(Arg) + L-arginine + ATP = L-arginyl-tRNA(Arg) + AMP + diphosphate. The polypeptide is Arginine--tRNA ligase (Helicobacter pylori (strain G27)).